Consider the following 416-residue polypeptide: Tyrosine--tRNA ligase (416 aa).

Tyrosine 39 serves as a coordination point for L-tyrosine. The 'HIGH' region motif lies at 44–53; sequence CTASSLHVGS. Tyrosine 176 and glutamine 180 together coordinate L-tyrosine. Positions 236–240 match the 'KMSKS' region motif; sequence KMGKT. ATP is bound at residue lysine 239. The S4 RNA-binding domain occupies 349–415; that stretch reads ISLIDLLHDI…GKKRHIKVMV (67 aa).

Belongs to the class-I aminoacyl-tRNA synthetase family. TyrS type 1 subfamily. As to quaternary structure, homodimer.

Its subcellular location is the cytoplasm. It carries out the reaction tRNA(Tyr) + L-tyrosine + ATP = L-tyrosyl-tRNA(Tyr) + AMP + diphosphate + H(+). In terms of biological role, catalyzes the attachment of tyrosine to tRNA(Tyr) in a two-step reaction: tyrosine is first activated by ATP to form Tyr-AMP and then transferred to the acceptor end of tRNA(Tyr). This chain is Tyrosine--tRNA ligase, found in Wolbachia sp. subsp. Brugia malayi (strain TRS).